A 252-amino-acid chain; its full sequence is Pantothenate synthetase (252 aa).

29–36 provides a ligand contact to ATP; sequence MGNLHAGH. His-36 serves as the catalytic Proton donor. Gln-60 serves as a coordination point for (R)-pantoate. Gln-60 contributes to the beta-alanine binding site. Residue 146–149 coordinates ATP; sequence GEKD. Residue Gln-152 coordinates (R)-pantoate. ATP is bound by residues Val-175 and 183–186; that span reads CSSR.

The protein belongs to the pantothenate synthetase family. Homodimer.

It is found in the cytoplasm. It carries out the reaction (R)-pantoate + beta-alanine + ATP = (R)-pantothenate + AMP + diphosphate + H(+). The protein operates within cofactor biosynthesis; (R)-pantothenate biosynthesis; (R)-pantothenate from (R)-pantoate and beta-alanine: step 1/1. Its function is as follows. Catalyzes the condensation of pantoate with beta-alanine in an ATP-dependent reaction via a pantoyl-adenylate intermediate. In Legionella pneumophila (strain Corby), this protein is Pantothenate synthetase.